The chain runs to 508 residues: Photosystem II CP47 reaction center protein (508 aa).

6 helical membrane-spanning segments follow: residues 21-36, 101-115, 140-156, 203-218, 237-252, and 457-472; these read AVHI…WAGS, IVFS…IWHW, GIHL…FGAF, IAAG…FHLS, VLSS…AFVV, and TFAL…HGAR.

Belongs to the PsbB/PsbC family. PsbB subfamily. As to quaternary structure, PSII is composed of 1 copy each of membrane proteins PsbA, PsbB, PsbC, PsbD, PsbE, PsbF, PsbH, PsbI, PsbJ, PsbK, PsbL, PsbM, PsbT, PsbX, PsbY, PsbZ, Psb30/Ycf12, at least 3 peripheral proteins of the oxygen-evolving complex and a large number of cofactors. It forms dimeric complexes. Binds multiple chlorophylls. PSII binds additional chlorophylls, carotenoids and specific lipids. is required as a cofactor.

It is found in the plastid. It localises to the chloroplast thylakoid membrane. One of the components of the core complex of photosystem II (PSII). It binds chlorophyll and helps catalyze the primary light-induced photochemical processes of PSII. PSII is a light-driven water:plastoquinone oxidoreductase, using light energy to abstract electrons from H(2)O, generating O(2) and a proton gradient subsequently used for ATP formation. This Agrostis stolonifera (Creeping bentgrass) protein is Photosystem II CP47 reaction center protein.